Reading from the N-terminus, the 81-residue chain is Protein Vpu (81 aa).

The Extracellular portion of the chain corresponds to M1 to V7. Residues A8–I28 form a helical membrane-spanning segment. Residues E29 to L81 lie on the Cytoplasmic side of the membrane. The disordered stretch occupies residues E50–L81. Positions N53–E63 are enriched in acidic residues. At S57 the chain carries Phosphoserine; by host CK2.

The protein belongs to the HIV-1 VPU protein family. In terms of assembly, homopentamer. Interacts with host CD4 and BRTC; these interactions induce proteasomal degradation of CD4. Interacts with host BST2; this interaction leads to the degradation of host BST2. Interacts with host FBXW11. Interacts with host AP1M1; this interaction plays a role in the mistrafficking and subsequent degradation of host BST2. Interacts with host RANBP2; this interaction allows Vpu to down-regulate host BLM sumoylation. In terms of processing, phosphorylated by host CK2. This phosphorylation is necessary for interaction with human BTRC and degradation of CD4.

Its subcellular location is the host membrane. With respect to regulation, ion channel activity is inhibited by hexamethylene amiloride in vitro. In terms of biological role, enhances virion budding by targeting host CD4 and Tetherin/BST2 to proteasome degradation. Degradation of CD4 prevents any unwanted premature interactions between viral Env and its host receptor CD4 in the endoplasmic reticulum. Degradation of antiretroviral protein Tetherin/BST2 is important for virion budding, as BST2 tethers new viral particles to the host cell membrane. Mechanistically, Vpu bridges either CD4 or BST2 to BTRC, a substrate recognition subunit of the Skp1/Cullin/F-box protein E3 ubiquitin ligase, induces their ubiquitination and subsequent proteasomal degradation. The alteration of the E3 ligase specificity by Vpu seems to promote the degradation of host IKBKB, leading to NF-kappa-B down-regulation and subsequent apoptosis. Acts as a viroporin that forms an oligomeric ion channel in membranes. Modulates the host DNA repair mechanisms to promote degradation of nuclear viral cDNA in cells that are already productively infected in order to suppress immune sensing and proviral hyper-integration (superinfection). Manipulates PML-NBs and modulates SUMOylation of host BLM protein thereby enhancing its DNA-end processing activity toward viral unintegrated linear DNA. Also inhibits RAD52-mediated homologous repair of viral cDNA, preventing the generation of dead-end circular forms of single copies of the long terminal repeat and permitting sustained nucleolytic attack. The protein is Protein Vpu of Homo sapiens (Human).